Reading from the N-terminus, the 391-residue chain is Phosphatidate cytidylyltransferase 4, chloroplastic (391 aa).

Residues 1–61 (MATFAELVLS…SVSRRFLTAV (61 aa)) constitute a chloroplast transit peptide. 6 helical membrane-spanning segments follow: residues 102-122 (IFGI…GWVF), 175-195 (FGNI…ALLV), 202-222 (FAQL…PSFW), 254-274 (VGLV…TFAF), 298-318 (IVGL…LSWP), and 321-341 (LFSS…GDLT).

The protein belongs to the CDS family. It depends on Mg(2+) as a cofactor.

The protein resides in the plastid. The protein localises to the chloroplast membrane. The enzyme catalyses a 1,2-diacyl-sn-glycero-3-phosphate + CTP + H(+) = a CDP-1,2-diacyl-sn-glycerol + diphosphate. It functions in the pathway phospholipid metabolism; CDP-diacylglycerol biosynthesis; CDP-diacylglycerol from sn-glycerol 3-phosphate: step 3/3. With respect to regulation, highest activities is obtained at about 30 mM CTP and 2 mM phosphatidic acid (PA). In terms of biological role, may be involved in the synthesis of minor phospholipids and in modulation of IP3-mediated signal transduction. Promotes the biosynthesis of plastidial phosphatidylglycerol (PG) which is required for structure and function of thylakoid membranes and, hence, for photoautotrophic growth. The sequence is that of Phosphatidate cytidylyltransferase 4, chloroplastic from Arabidopsis thaliana (Mouse-ear cress).